Consider the following 356-residue polypeptide: DNA-directed RNA polymerase subunit alpha (356 aa).

The interval 1–259 (MIKAAATLKS…KLMTACLTTL (259 aa)) is alpha N-terminal domain (alpha-NTD). The alpha C-terminal domain (alpha-CTD) stretch occupies residues 277 to 356 (FVQVNYNKME…STYGIELKED (80 aa)).

Belongs to the RNA polymerase alpha chain family. In terms of assembly, in plastids the minimal PEP RNA polymerase catalytic core is composed of four subunits: alpha, beta, beta', and beta''. When a (nuclear-encoded) sigma factor is associated with the core the holoenzyme is formed, which can initiate transcription.

It is found in the plastid. Its subcellular location is the chloroplast. The catalysed reaction is RNA(n) + a ribonucleoside 5'-triphosphate = RNA(n+1) + diphosphate. Its function is as follows. DNA-dependent RNA polymerase catalyzes the transcription of DNA into RNA using the four ribonucleoside triphosphates as substrates. The chain is DNA-directed RNA polymerase subunit alpha from Ostreococcus tauri.